Reading from the N-terminus, the 574-residue chain is PI-PLC X domain-containing protein DDB_G0269228 (574 aa).

The interval 1–42 (MFSSIMFKKKPKQNLNENEITSQSTTTTSTLSDSKPSEKKIK) is disordered. Residues 21–34 (TSQSTTTTSTLSDS) are compositionally biased toward low complexity. The region spanning 270-449 (GIKSSSLRVP…LKKRIINDDG (180 aa)) is the PI-PLC X-box domain.

This Dictyostelium discoideum (Social amoeba) protein is PI-PLC X domain-containing protein DDB_G0269228.